Here is a 689-residue protein sequence, read N- to C-terminus: Putative ATP-dependent helicase IRC3 (689 aa).

The Helicase ATP-binding domain occupies 46–211 (NSIRQGTKRI…SMVMDKIVYH (166 aa)). An ATP-binding site is contributed by 59-66 (LATGGGKT). A DEAH box motif is present at residues 158–161 (DEAH). The 174-residue stretch at 265–438 (ILKTYLHKKQ…KIDERLRALF (174 aa)) folds into the Helicase C-terminal domain.

Belongs to the helicase family. IRC3 subfamily.

The protein resides in the mitochondrion. This chain is Putative ATP-dependent helicase IRC3 (IRC3), found in Saccharomyces cerevisiae (strain ATCC 204508 / S288c) (Baker's yeast).